The sequence spans 238 residues: Serine protease SplE (238 aa).

The first 36 residues, 1–36 (MNKNIIIKSIAALTILTSVTGVGTTVVEGIQQTAKA), serve as a signal peptide directing secretion. Active-site charge relay system residues include His75, Asp113, and Ser191.

Belongs to the peptidase S1B family.

It localises to the secreted. In Staphylococcus aureus (strain USA300), this protein is Serine protease SplE (splE).